The chain runs to 27 residues: Cationic protein C1 (27 aa).

Its subcellular location is the secreted. It is found in the nematocyst. The protein is Cationic protein C1 of Bunodosoma caissarum (Sea anemone).